Reading from the N-terminus, the 378-residue chain is Erythronate-4-phosphate dehydrogenase (378 aa).

Substrate-binding residues include serine 45 and threonine 66. NAD(+) contacts are provided by aspartate 146 and threonine 175. Residue arginine 208 is part of the active site. Aspartate 232 lines the NAD(+) pocket. The active site involves glutamate 237. Catalysis depends on histidine 254, which acts as the Proton donor. Glycine 257 serves as a coordination point for NAD(+). Position 258 (tyrosine 258) interacts with substrate.

The protein belongs to the D-isomer specific 2-hydroxyacid dehydrogenase family. PdxB subfamily. Homodimer.

Its subcellular location is the cytoplasm. It catalyses the reaction 4-phospho-D-erythronate + NAD(+) = (R)-3-hydroxy-2-oxo-4-phosphooxybutanoate + NADH + H(+). It functions in the pathway cofactor biosynthesis; pyridoxine 5'-phosphate biosynthesis; pyridoxine 5'-phosphate from D-erythrose 4-phosphate: step 2/5. Functionally, catalyzes the oxidation of erythronate-4-phosphate to 3-hydroxy-2-oxo-4-phosphonooxybutanoate. The polypeptide is Erythronate-4-phosphate dehydrogenase (Salmonella dublin (strain CT_02021853)).